A 257-amino-acid chain; its full sequence is GTP cyclohydrolase FolE2 (257 aa).

This sequence belongs to the GTP cyclohydrolase IV family.

The catalysed reaction is GTP + H2O = 7,8-dihydroneopterin 3'-triphosphate + formate + H(+). The protein operates within cofactor biosynthesis; 7,8-dihydroneopterin triphosphate biosynthesis; 7,8-dihydroneopterin triphosphate from GTP: step 1/1. In terms of biological role, converts GTP to 7,8-dihydroneopterin triphosphate. The chain is GTP cyclohydrolase FolE2 from Kosmotoga olearia (strain ATCC BAA-1733 / DSM 21960 / TBF 19.5.1).